The sequence spans 80 residues: Large ribosomal subunit protein bL31B (80 aa).

It belongs to the bacterial ribosomal protein bL31 family. Type B subfamily. As to quaternary structure, part of the 50S ribosomal subunit.

The polypeptide is Large ribosomal subunit protein bL31B (Streptococcus pneumoniae serotype 2 (strain D39 / NCTC 7466)).